A 468-amino-acid chain; its full sequence is Neuronal acetylcholine receptor subunit alpha-5 (468 aa).

The first 22 residues, M1 to G22, serve as a signal peptide directing secretion. At R23–T254 the chain is on the extracellular side. Residues N155, N183, and N229 are each glycosylated (N-linked (GlcNAc...) asparagine). C170 and C184 are joined by a disulfide. C234 and C235 are disulfide-bonded. 3 consecutive transmembrane segments (helical) span residues L255–P275, I282–I302, and L317–I337. Topologically, residues H338–R429 are cytoplasmic. A helical membrane pass occupies residues M430–I451. The Extracellular segment spans residues Y452–K468.

It belongs to the ligand-gated ion channel (TC 1.A.9) family. Acetylcholine receptor (TC 1.A.9.1) subfamily. Alpha-5/CHRNA5 sub-subfamily. In terms of assembly, neuronal AChR that forms heteropentamers composed of two different type of subunits: alpha and non-alpha (beta). CHRNA5/alpha-5 subunit is only able to form functional nAChRs when co-assembled with another alpha subunit, can be combined to CHRNA4/alpha-4 or CHRNA3/alpha-3 and CHRNB4/beta-4 or CHRNB2/beta-2 to give rise to functional receptors. Interacts with LYPD6.

It localises to the synaptic cell membrane. Its subcellular location is the cell membrane. It carries out the reaction Ca(2+)(in) = Ca(2+)(out). The catalysed reaction is K(+)(in) = K(+)(out). It catalyses the reaction Na(+)(in) = Na(+)(out). Activated by a myriad of ligands such as acetylcholine, cytisine, nicotine, choline and epibatidine. In terms of biological role, component of neuronal acetylcholine receptors (nAChRs) that function as pentameric, ligand-gated cation channels with high calcium permeability among other activities. nAChRs are excitatory neurotrasnmitter receptors formed by a collection of nAChR subunits known to mediate synaptic transmission in the nervous system and the neuromuscular junction. Each nAchR subunit confers differential attributes to channel properties, including activation, deactivation and desensitization kinetics, pH sensitivity, cation permeability, and binding to allosteric modulators. Has an accessory rather than functional role and is only able to form functional nAChRs when co-assembled with another beta subunit. Participates in pentameric assemblies along with CHRNA3, CHRNA4, CHRNB2 and CHRNB4. Increases receptor sensitivity to acetylcholine and nicotine when associated with CHRNA4 and CHRNB2. Plays a role in nicotine addiction. The chain is Neuronal acetylcholine receptor subunit alpha-5 from Homo sapiens (Human).